The sequence spans 483 residues: Ankyrin repeat domain-containing protein M-T5 (483 aa).

6 ANK repeats span residues 32–63, 67–101, 105–137, 177–210, 250–279, and 283–312; these read SRDTPFRLYLTRYDCTPEGLRLFLTRGADVNG, SRTSPLCTVLSNKDLGNEAEALAKQLIDAGADVNA, DGRYPLLCLLENDRINTARFVRYMIDRGTSVYV, YGFNVLQCYMIAHVRSSNVQILRFLLRHGVDSSR, LDFTPINYCVIHNDRRTFDYLLERGADPNV, and LGNSCLDLAVLNGNKYMVHRLLRKTITPDA. A PRANC/F-box-like region spans residues 390 to 478; the sequence is VSVFDTAFGL…LTDDEIHDLF (89 aa).

Interacts (via PRANC/F-box-like domain) with the SKP1 component of the host SCF ubiquitin ligase complex. Interacts (via N-terminus) with host AKT1.

In terms of biological role, substrate-specific adapter of SKP1-containing E3 ubiquitin-protein ligases which mediate the ubiquitination and subsequent proteasomal degradation of host target proteins including CDKN1B. Disappearance of host CDKN1B correlates with cell cycle progression through the G0/G1 checkpoint. Therefore, viruses in infected cells are protected from diverse innate host antiviral responses normally triggered by G0/G1 cell cycle arrest. In Myxoma virus (strain Lausanne) (MYXV), this protein is Ankyrin repeat domain-containing protein M-T5 (m005R).